The primary structure comprises 359 residues: Molybdenum import ATP-binding protein ModC (359 aa).

An ABC transporter domain is found at M1–V233. G32 to T39 contributes to the ATP binding site. A Mop domain is found at A289–A355.

The protein belongs to the ABC transporter superfamily. Molybdate importer (TC 3.A.1.8) family. As to quaternary structure, the complex is composed of two ATP-binding proteins (ModC), two transmembrane proteins (ModB) and a solute-binding protein (ModA).

Its subcellular location is the cell inner membrane. It catalyses the reaction molybdate(out) + ATP + H2O = molybdate(in) + ADP + phosphate + H(+). In terms of biological role, part of the ABC transporter complex ModABC involved in molybdenum import. Responsible for energy coupling to the transport system. This Brucella melitensis biotype 1 (strain ATCC 23456 / CCUG 17765 / NCTC 10094 / 16M) protein is Molybdenum import ATP-binding protein ModC.